The chain runs to 107 residues: Virulence factor PGA16 (107 aa).

An N-terminal signal peptide occupies residues Met1–Ala18. The segment at Ser26–Asn56 is disordered. Residues Asn33–Asn56 show a composition bias toward low complexity. 2 N-linked (GlcNAc...) asparagine glycosylation sites follow: Asn53 and Asn56. Gly76 carries GPI-anchor amidated glycine lipidation. A propeptide spans Val77–Leu107 (removed in mature form).

It is found in the cell membrane. Functionally, cell surface GPI-anchored protein required for virulence. Mediates hyphal ramification which is important for the interaction with host cells. This Candida albicans (strain SC5314 / ATCC MYA-2876) (Yeast) protein is Virulence factor PGA16 (PGA16).